The primary structure comprises 545 residues: Ribulokinase (545 aa).

Belongs to the ribulokinase family.

The enzyme catalyses D-ribulose + ATP = D-ribulose 5-phosphate + ADP + H(+). The catalysed reaction is L-ribulose + ATP = L-ribulose 5-phosphate + ADP + H(+). Its pathway is carbohydrate degradation; L-arabinose degradation via L-ribulose; D-xylulose 5-phosphate from L-arabinose (bacterial route): step 2/3. The polypeptide is Ribulokinase (Staphylococcus aureus (strain MSSA476)).